The chain runs to 268 residues: Pantothenate synthetase (268 aa).

18–25 (MGYLHEGH) provides a ligand contact to ATP. H25 acts as the Proton donor in catalysis. A (R)-pantoate-binding site is contributed by Q49. Position 49 (Q49) interacts with beta-alanine. 135-138 (GQKD) is a binding site for ATP. Q141 contributes to the (R)-pantoate binding site. Residues I164 and 172–175 (LSSR) each bind ATP.

This sequence belongs to the pantothenate synthetase family. As to quaternary structure, homodimer.

It localises to the cytoplasm. It catalyses the reaction (R)-pantoate + beta-alanine + ATP = (R)-pantothenate + AMP + diphosphate + H(+). It functions in the pathway cofactor biosynthesis; (R)-pantothenate biosynthesis; (R)-pantothenate from (R)-pantoate and beta-alanine: step 1/1. Catalyzes the condensation of pantoate with beta-alanine in an ATP-dependent reaction via a pantoyl-adenylate intermediate. The sequence is that of Pantothenate synthetase from Dehalococcoides mccartyi (strain CBDB1).